The following is a 287-amino-acid chain: Inorganic pyrophosphatase (287 aa).

Diphosphate is bound at residue Arg-79. The Mg(2+) site is built by Asp-116, Asp-121, and Asp-153. The span at 244–258 (NSTLGNSDSVDSSKL) shows a compositional bias: polar residues. The disordered stretch occupies residues 244-269 (NSTLGNSDSVDSSKLASIPRGENLPP).

Belongs to the PPase family. Requires Mg(2+) as cofactor.

Its subcellular location is the cytoplasm. It catalyses the reaction diphosphate + H2O = 2 phosphate + H(+). Functionally, involved in osmoadaptation. In Emericella nidulans (strain FGSC A4 / ATCC 38163 / CBS 112.46 / NRRL 194 / M139) (Aspergillus nidulans), this protein is Inorganic pyrophosphatase (ipp1).